Consider the following 450-residue polypeptide: 23S rRNA (uracil(1939)-C(5))-methyltransferase RlmD (450 aa).

Residues 1 to 22 are disordered; that stretch reads MARNKGGLRFQPSGGARGPAIP. In terms of domain architecture, TRAM spans 20-78; it reads AIPVGKKQRLTIERLAHDGRGIAHEAGMTWFVSGGLPGEELEARVLGARSKVVDARSER. Cysteine 91, cysteine 97, cysteine 100, and cysteine 179 together coordinate [4Fe-4S] cluster. Glutamine 283, phenylalanine 312, asparagine 317, glutamate 333, aspartate 360, and aspartate 381 together coordinate S-adenosyl-L-methionine. Cysteine 407 acts as the Nucleophile in catalysis.

It belongs to the class I-like SAM-binding methyltransferase superfamily. RNA M5U methyltransferase family. RlmD subfamily.

It catalyses the reaction uridine(1939) in 23S rRNA + S-adenosyl-L-methionine = 5-methyluridine(1939) in 23S rRNA + S-adenosyl-L-homocysteine + H(+). Catalyzes the formation of 5-methyl-uridine at position 1939 (m5U1939) in 23S rRNA. This is 23S rRNA (uracil(1939)-C(5))-methyltransferase RlmD from Pseudomonas aeruginosa (strain UCBPP-PA14).